The chain runs to 231 residues: 5'-methylthioadenosine/S-adenosylhomocysteine nucleosidase (231 aa).

Catalysis depends on glutamate 13, which acts as the Proton acceptor. Substrate is bound by residues glycine 79, methionine 154, and 175-176; that span reads ME. Aspartate 199 functions as the Proton donor in the catalytic mechanism.

This sequence belongs to the PNP/UDP phosphorylase family. MtnN subfamily.

The catalysed reaction is S-adenosyl-L-homocysteine + H2O = S-(5-deoxy-D-ribos-5-yl)-L-homocysteine + adenine. It catalyses the reaction S-methyl-5'-thioadenosine + H2O = 5-(methylsulfanyl)-D-ribose + adenine. The enzyme catalyses 5'-deoxyadenosine + H2O = 5-deoxy-D-ribose + adenine. Its pathway is amino-acid biosynthesis; L-methionine biosynthesis via salvage pathway; S-methyl-5-thio-alpha-D-ribose 1-phosphate from S-methyl-5'-thioadenosine (hydrolase route): step 1/2. In terms of biological role, catalyzes the irreversible cleavage of the glycosidic bond in both 5'-methylthioadenosine (MTA) and S-adenosylhomocysteine (SAH/AdoHcy) to adenine and the corresponding thioribose, 5'-methylthioribose and S-ribosylhomocysteine, respectively. Also cleaves 5'-deoxyadenosine, a toxic by-product of radical S-adenosylmethionine (SAM) enzymes, into 5-deoxyribose and adenine. In Marinomonas sp. (strain MWYL1), this protein is 5'-methylthioadenosine/S-adenosylhomocysteine nucleosidase.